We begin with the raw amino-acid sequence, 458 residues long: ATP synthase subunit beta (458 aa).

ATP is bound at residue 148–155; sequence GGAGVGKT.

Belongs to the ATPase alpha/beta chains family. As to quaternary structure, F-type ATPases have 2 components, CF(1) - the catalytic core - and CF(0) - the membrane proton channel. CF(1) has five subunits: alpha(3), beta(3), gamma(1), delta(1), epsilon(1). CF(0) has three main subunits: a(1), b(2) and c(9-12). The alpha and beta chains form an alternating ring which encloses part of the gamma chain. CF(1) is attached to CF(0) by a central stalk formed by the gamma and epsilon chains, while a peripheral stalk is formed by the delta and b chains.

The protein localises to the cell inner membrane. The catalysed reaction is ATP + H2O + 4 H(+)(in) = ADP + phosphate + 5 H(+)(out). Produces ATP from ADP in the presence of a proton gradient across the membrane. The catalytic sites are hosted primarily by the beta subunits. The protein is ATP synthase subunit beta of Pseudomonas fluorescens (strain Pf0-1).